The primary structure comprises 297 residues: UBX domain-containing protein 1 (297 aa).

N-acetylalanine is present on Ala2. Positions 2–42 (AELTALESLIEMGFPKGRAEKALALTGNQGIEAAMDWLMEH) constitute a UBA domain. The interval 40 to 210 (MEHEDDPDVD…PSREPPTKRE (171 aa)) is disordered. The interval 43–297 (EDDPDVDEPL…VLIVAKKCPG (255 aa)) is interaction with BRCA1. Basic and acidic residues-rich tracts occupy residues 86–122 (LTEE…ERER) and 137–177 (RLQE…ERAK). A coiled-coil region spans residues 86–176 (LTEEERQEQT…KIERDKAERA (91 aa)). The span at 187 to 199 (PSPPATEPGPVPS) shows a compositional bias: pro residues. Ser199 is subject to Phosphoserine. The residue at position 200 (Ser200) is a Phosphoserine; by MAPK12. Residues Thr207 and Thr229 each carry the phosphothreonine modification. The region spanning 209 to 291 (REYDQCRIQV…GLVPSAVLIV (83 aa)) is the UBX domain. The residue at position 270 (Ser270) is a Phosphoserine.

Component of a complex required to couple retrotranslocation, ubiquitination and deglycosylation composed of NGLY1, SAKS1, AMFR, VCP and RAD23B. Interacts with HOMER2. Interacts directly with VCP. Interacts with BRCA1 and BARD1; interaction takes place when BRCA1 is not autoubiquitinated bur is strongly enhanced in the presence of autoubiquitinated BRCA1.

It localises to the cytoplasm. Its function is as follows. Ubiquitin-binding protein that interacts with the BRCA1-BARD1 heterodimer, and regulates its activity. Specifically binds 'Lys-6'-linked polyubiquitin chains. Interaction with autoubiquitinated BRCA1, leads to inhibit the E3 ubiquitin-protein ligase activity of the BRCA1-BARD1 heterodimer. Component of a complex required to couple deglycosylation and proteasome-mediated degradation of misfolded proteins in the endoplasmic reticulum that are retrotranslocated in the cytosol. The chain is UBX domain-containing protein 1 (UBXN1) from Bos taurus (Bovine).